We begin with the raw amino-acid sequence, 58 residues long: DNA-binding protein (58 aa).

Basic residues-rich tracts occupy residues 1–19 (MVRRRRSRSPYRRRSRSRS) and 28–58 (SRYRSRSRSRSRSRSRARSRSPYHHHINQYI). The interval 1-58 (MVRRRRSRSPYRRRSRSRSRSGSDRSRSRYRSRSRSRSRSRSRARSRSPYHHHINQYI) is disordered.

Post-translationally, probably phosphorylated in infected cells.

It localises to the virion. Its function is as follows. Thought to be responsible for DNA condensation during packaging of the nucleocapsids. The sequence is that of DNA-binding protein (P7.3) from Cryptophlebia leucotreta granulosis virus (ClGV).